Here is a 215-residue protein sequence, read N- to C-terminus: Cytochrome b6 (215 aa).

The helical transmembrane segment at 32-52 (IFYCFGGITFTCFLVQVATGF) threads the bilayer. Position 35 (Cys35) interacts with heme c. His86 and His100 together coordinate heme b. 3 helical membrane passes run 90–110 (ASMMVLMMILHIFRVYLTGGF), 116–136 (LTWVTGVLMAVCTVSFGVTGY), and 186–206 (LHTFVLPLFTAVFMLMHFLMI). Heme b contacts are provided by His187 and His202.

This sequence belongs to the cytochrome b family. PetB subfamily. As to quaternary structure, the 4 large subunits of the cytochrome b6-f complex are cytochrome b6, subunit IV (17 kDa polypeptide, PetD), cytochrome f and the Rieske protein, while the 4 small subunits are PetG, PetL, PetM and PetN. The complex functions as a dimer. The cofactor is heme b. Requires heme c as cofactor.

The protein localises to the plastid. The protein resides in the chloroplast thylakoid membrane. Component of the cytochrome b6-f complex, which mediates electron transfer between photosystem II (PSII) and photosystem I (PSI), cyclic electron flow around PSI, and state transitions. The chain is Cytochrome b6 from Auxenochlorella protothecoides (Green microalga).